The sequence spans 351 residues: S-adenosylmethionine:tRNA ribosyltransferase-isomerase (351 aa).

This sequence belongs to the QueA family. Monomer.

The protein localises to the cytoplasm. The enzyme catalyses 7-aminomethyl-7-carbaguanosine(34) in tRNA + S-adenosyl-L-methionine = epoxyqueuosine(34) in tRNA + adenine + L-methionine + 2 H(+). It functions in the pathway tRNA modification; tRNA-queuosine biosynthesis. Its function is as follows. Transfers and isomerizes the ribose moiety from AdoMet to the 7-aminomethyl group of 7-deazaguanine (preQ1-tRNA) to give epoxyqueuosine (oQ-tRNA). This chain is S-adenosylmethionine:tRNA ribosyltransferase-isomerase, found in Hahella chejuensis (strain KCTC 2396).